A 564-amino-acid polypeptide reads, in one-letter code: MLWAIVLLGYLLFVVEWFVIDRIAGKPAGILDSNTKVLPNYDGWVNSFFANSAGSIAGSATNWSITLLRAVGSVLCGIVVLKFGYRYAVMIMMGLMCLCFPFLIIGDPLGGNNQLTLLRPLSKEVMGKLSSLSSQLHEGQLLGPVMAEGKTMLADGQTIDLVQGLDKNLIGTSSSIAGYALFIIFRSTIAIGGTTLVTYSQPLIASLSTQRRKSVLSNANLWGFNSGIVVAFVPFLFQSVQQAGTKYWVFILTALILIGFGILCVFAWFEKQMDPFMPQKQTKEQMQLGNQPSAGDILKRKATWKMIGMYGICLVVLVNPLTGGWWNILQAVSPASSFNVKDGVKTLKPLEGAGGYFAGLPTLAILWVLGYGMGYMVFSPFNKTVYDRKRWLSFMFFMNALMVIVIVLFAATLGVGTAVGFAFVAIATFIGGSFAWSMQSTILILPHEFKEYKRSEVSVLFGYIWGFGYVIYTAFDITNSMFLEAPKLANPGMKGVSILPGAIAGVALFAGLLLAAIAIVVTLPSSYLKNGDELVSEMTKKWKLNQWQFLVASKEKNRYADLLK.

The next 12 helical transmembrane spans lie at 1–21, 65–85, 89–109, 176–196, 220–240, 249–269, 306–326, 358–378, 404–424, 425–445, 457–477, and 501–521; these read MLWA…FVID, ITLL…KFGY, VMIM…GDPL, IAGY…GTTL, NLWG…FQSV, VFIL…FAWF, MIGM…GGWW, AGLP…YMVF, IVIV…FAFV, AIAT…ILIL, VSVL…AFDI, and GAIA…AIVV.

Belongs to the major facilitator superfamily.

It localises to the cell membrane. This is Major facilitator superfamily transporter MPN_076 from Mycoplasma pneumoniae (strain ATCC 29342 / M129 / Subtype 1) (Mycoplasmoides pneumoniae).